The chain runs to 516 residues: Apolipoprotein N-acyltransferase (516 aa).

Helical transmembrane passes span 23–43, 68–88, 94–114, 135–155, and 178–198; these read ILIL…AFAP, AFWL…RWIY, VAGL…AYLA, WLLA…WVMT, and LGGI…LAML. The 241-residue stretch at 241 to 481 folds into the CN hydrolase domain; that stretch reads AQGNIAQELK…VLTGFAQSRQ (241 aa). Catalysis depends on glutamate 279, which acts as the Proton acceptor. Lysine 339 is a catalytic residue. Cysteine 391 functions as the Nucleophile in the catalytic mechanism. The chain crosses the membrane as a helical span at residues 489–509; the sequence is FGNLPVVLGCGALLLLALLLG.

Belongs to the CN hydrolase family. Apolipoprotein N-acyltransferase subfamily.

The protein localises to the cell inner membrane. It carries out the reaction N-terminal S-1,2-diacyl-sn-glyceryl-L-cysteinyl-[lipoprotein] + a glycerophospholipid = N-acyl-S-1,2-diacyl-sn-glyceryl-L-cysteinyl-[lipoprotein] + a 2-acyl-sn-glycero-3-phospholipid + H(+). It participates in protein modification; lipoprotein biosynthesis (N-acyl transfer). Its function is as follows. Catalyzes the phospholipid dependent N-acylation of the N-terminal cysteine of apolipoprotein, the last step in lipoprotein maturation. The polypeptide is Apolipoprotein N-acyltransferase (Chromobacterium violaceum (strain ATCC 12472 / DSM 30191 / JCM 1249 / CCUG 213 / NBRC 12614 / NCIMB 9131 / NCTC 9757 / MK)).